The primary structure comprises 354 residues: Uroporphyrinogen decarboxylase (354 aa).

Residues 27–31 (RQAGR), aspartate 77, tyrosine 154, threonine 209, and histidine 327 contribute to the substrate site.

The protein belongs to the uroporphyrinogen decarboxylase family. As to quaternary structure, homodimer.

The protein localises to the cytoplasm. The enzyme catalyses uroporphyrinogen III + 4 H(+) = coproporphyrinogen III + 4 CO2. It functions in the pathway porphyrin-containing compound metabolism; protoporphyrin-IX biosynthesis; coproporphyrinogen-III from 5-aminolevulinate: step 4/4. In terms of biological role, catalyzes the decarboxylation of four acetate groups of uroporphyrinogen-III to yield coproporphyrinogen-III. The protein is Uroporphyrinogen decarboxylase of Serratia proteamaculans (strain 568).